A 120-amino-acid chain; its full sequence is NAD(P)H-quinone oxidoreductase subunit 3 (120 aa).

3 helical membrane-spanning segments follow: residues 6 to 26 (GYEY…LALT), 64 to 84 (MFAL…PWAV), and 89 to 109 (LGLL…VALA).

It belongs to the complex I subunit 3 family. In terms of assembly, NDH-1 can be composed of about 15 different subunits; different subcomplexes with different compositions have been identified which probably have different functions.

Its subcellular location is the cellular thylakoid membrane. The catalysed reaction is a plastoquinone + NADH + (n+1) H(+)(in) = a plastoquinol + NAD(+) + n H(+)(out). It catalyses the reaction a plastoquinone + NADPH + (n+1) H(+)(in) = a plastoquinol + NADP(+) + n H(+)(out). Functionally, NDH-1 shuttles electrons from an unknown electron donor, via FMN and iron-sulfur (Fe-S) centers, to quinones in the respiratory and/or the photosynthetic chain. The immediate electron acceptor for the enzyme in this species is believed to be plastoquinone. Couples the redox reaction to proton translocation, and thus conserves the redox energy in a proton gradient. Cyanobacterial NDH-1 also plays a role in inorganic carbon-concentration. In Prochlorococcus marinus (strain NATL1A), this protein is NAD(P)H-quinone oxidoreductase subunit 3.